The chain runs to 510 residues: Ninja-family protein mc410 (510 aa).

Disordered stretches follow at residues 1 to 179, 323 to 414, and 481 to 510; these read MDEN…RQIL, HPSH…PSEF, and RHAS…SAQS. 2 stretches are compositionally biased toward basic and acidic residues: residues 31–44 and 103–146; these read SKVE…KVIN and RPVE…DKTR. The segment covering 148 to 160 has biased composition (polar residues); the sequence is SHISITTDEGSTA. Composition is skewed to basic and acidic residues over residues 363-389 and 397-406; these read RAME…EENV and RAKDPPDQPR. Polar residues predominate over residues 485–496; the sequence is VEQTSQEPGTGV. A compositionally biased stretch (low complexity) spans 497 to 510; it reads SSFPSSNPAASAQS.

This sequence belongs to the Ninja family.

The protein localises to the nucleus. In Nicotiana tabacum (Common tobacco), this protein is Ninja-family protein mc410 (MC410).